A 384-amino-acid polypeptide reads, in one-letter code: 8-amino-7-oxononanoate synthase (384 aa).

Arg21 provides a ligand contact to substrate. 108-109 is a pyridoxal 5'-phosphate binding site; it reads GF. His133 lines the substrate pocket. Ser179, His207, and Thr233 together coordinate pyridoxal 5'-phosphate. Lys236 bears the N6-(pyridoxal phosphate)lysine mark. Thr352 is a substrate binding site.

It belongs to the class-II pyridoxal-phosphate-dependent aminotransferase family. BioF subfamily. In terms of assembly, homodimer. It depends on pyridoxal 5'-phosphate as a cofactor.

The catalysed reaction is 6-carboxyhexanoyl-[ACP] + L-alanine + H(+) = (8S)-8-amino-7-oxononanoate + holo-[ACP] + CO2. It participates in cofactor biosynthesis; biotin biosynthesis. Its function is as follows. Catalyzes the decarboxylative condensation of pimeloyl-[acyl-carrier protein] and L-alanine to produce 8-amino-7-oxononanoate (AON), [acyl-carrier protein], and carbon dioxide. The protein is 8-amino-7-oxononanoate synthase of Escherichia coli (strain SE11).